The following is a 152-amino-acid chain: Large ribosomal subunit protein uL15 (152 aa).

Residues 1-57 are disordered; it reads MTSTLNTLKSNSGSRKKKLRKGRGIAAGQGASCGFGMRGQKSRSGRPTRPGFEGGQM. Residues 14-23 are compositionally biased toward basic residues; sequence SRKKKLRKGR. Gly residues predominate over residues 25–37; sequence IAAGQGASCGFGM.

Belongs to the universal ribosomal protein uL15 family. As to quaternary structure, part of the 50S ribosomal subunit.

Functionally, binds to the 23S rRNA. The polypeptide is Large ribosomal subunit protein uL15 (Prochlorococcus marinus (strain MIT 9301)).